The following is a 511-amino-acid chain: Histidine ammonia-lyase (511 aa).

A cross-link (5-imidazolinone (Ala-Gly)) is located at residues 142 to 144 (ASG). At serine 143 the chain carries 2,3-didehydroalanine (Ser).

Belongs to the PAL/histidase family. Post-translationally, contains an active site 4-methylidene-imidazol-5-one (MIO), which is formed autocatalytically by cyclization and dehydration of residues Ala-Ser-Gly.

It localises to the cytoplasm. It catalyses the reaction L-histidine = trans-urocanate + NH4(+). It functions in the pathway amino-acid degradation; L-histidine degradation into L-glutamate; N-formimidoyl-L-glutamate from L-histidine: step 1/3. This Brucella canis (strain ATCC 23365 / NCTC 10854 / RM-666) protein is Histidine ammonia-lyase.